The primary structure comprises 83 residues: Bublin coiled-coil protein (83 aa).

The interval 1 to 25 (MSGPNGDLGMPVDAGTEGENDSFGE) is disordered. Residues 25–74 (EAEYAAINSMLDQINSCLDHLEEKNDHLHARLQELLESNRQTRLEFQQQL) adopt a coiled-coil conformation. S82 is subject to Phosphoserine.

This sequence belongs to the UPF0184 (EST00098) family.

The protein localises to the cell junction. It localises to the cytoplasm. The protein resides in the cytoskeleton. In terms of biological role, essential for intermediate filament organization in intestinal cells, interacts with intermediate filament and regulates intestinal lumen morphology. This Mus musculus (Mouse) protein is Bublin coiled-coil protein.